The following is a 25-amino-acid chain: Acyl carrier protein (25 aa).

Residues 2–25 form the Carrier domain; it reads ESIEQRVKKIVAEQLGVAEAEIKA.

This sequence belongs to the acyl carrier protein (ACP) family. 4'-phosphopantetheine is transferred from CoA to a specific serine of apo-ACP by AcpS. This modification is essential for activity because fatty acids are bound in thioester linkage to the sulfhydryl of the prosthetic group.

It is found in the cytoplasm. It participates in lipid metabolism; fatty acid biosynthesis. Functionally, carrier of the growing fatty acid chain in fatty acid biosynthesis. The sequence is that of Acyl carrier protein (acpP) from Alcaligenes faecalis.